The following is a 173-amino-acid chain: Atrial gland and califin peptides (173 aa).

The first 21 residues, 1-21 (MKANTMFIILCLSLSTLCVSS), serve as a signal peptide directing secretion. A propeptide spanning residues 22 to 34 (QSTSVHGKIFVPN) is cleaved from the precursor. Ile-69 bears the Isoleucine amide mark. The propeptide occupies 73-114 (AAGEMEQSEGQNPETKSHSWRKRSVLTPSLSSLGESLESGIS). Residues 75 to 94 (GEMEQSEGQNPETKSHSWRK) are disordered. The cysteines at positions 141 and 172 are disulfide-linked. Leu-152 carries the leucine amide modification.

This sequence belongs to the molluscan ELH family. As to quaternary structure, califin A consists of a 36-residue large subunit bound by a single disulfide bond to a 18-residue small subunit.

The protein resides in the secreted. In terms of biological role, the atrial gland peptide A and peptide B precursors are the source of the 2 peptides that, upon release from this reproductive system gland, initiate the egg-laying process by exciting the bag cell neurons. These neurons, clustered in neural connectives near the abdominal ganglion, in turn release other peptides that act directly on the ganglion and also, via the circulating hemolymph, on many other organs to control the physiological processes of egg-laying. One of these other peptides is the egg-laying hormone. Injected in sexually mature animals califin A excites LB and LC cells of the abdominal ganglion and causes egg-laying. This chain is Atrial gland and califin peptides, found in Aplysia californica (California sea hare).